We begin with the raw amino-acid sequence, 189 residues long: Chitin synthase 1 (189 aa).

Belongs to the chitin synthase family.

It localises to the cell membrane. The enzyme catalyses [(1-&gt;4)-N-acetyl-beta-D-glucosaminyl](n) + UDP-N-acetyl-alpha-D-glucosamine = [(1-&gt;4)-N-acetyl-beta-D-glucosaminyl](n+1) + UDP + H(+). Its function is as follows. Polymerizes chitin, a structural polymer of the cell wall and septum, by transferring the sugar moiety of UDP-GlcNAc to the non-reducing end of the growing chitin polymer. The protein is Chitin synthase 1 (CHS1) of Schizophyllum commune (Split gill fungus).